We begin with the raw amino-acid sequence, 176 residues long: Urease accessory protein UreE (176 aa).

The tract at residues 147-176 is disordered; it reads AGAYQQGGGHSHGHAHSHSHEKPHSHTHNH.

Belongs to the UreE family.

It localises to the cytoplasm. Functionally, involved in urease metallocenter assembly. Binds nickel. Probably functions as a nickel donor during metallocenter assembly. The chain is Urease accessory protein UreE from Alcanivorax borkumensis (strain ATCC 700651 / DSM 11573 / NCIMB 13689 / SK2).